The following is a 223-amino-acid chain: MLYRSISCPKGTFFMTTPPAAAEIFGDNLEKAIAYHESLATDGSVRGFIGPREVPRLWDRHILNCGVIGEAMDEGISVADIGSGAGLPGIPLAIARPDLNITLIEPLLKRSVYLNEVKEALNLDNVTVIRGRAEEKVVRKQVGLVDIVTSRAVAPLGKLATWSLPLVKIGGRMVAMKGSSVEEEIERDAKEIRKAGGTDIKVYTVGEALLSEPTTLISIRREK.

S-adenosyl-L-methionine is bound by residues Gly-82, Leu-87, 133 to 134 (AE), and Arg-151.

The protein belongs to the methyltransferase superfamily. RNA methyltransferase RsmG family.

The protein resides in the cytoplasm. Functionally, specifically methylates the N7 position of guanine in position 518 of 16S rRNA. The sequence is that of Ribosomal RNA small subunit methyltransferase G from Corynebacterium glutamicum (strain R).